The primary structure comprises 3351 residues: Apolipophorins (3351 aa).

Residues 1–25 (MARMKYNIALIGILASVLLTIAVNA) form the signal peptide. The region spanning 43–641 (YIPGNYYDYS…SQHGFLPRSS (599 aa)) is the Vitellogenin domain. Asn-67, Asn-644, Asn-1514, Asn-1744, Asn-1932, Asn-1979, and Asn-2822 each carry an N-linked (GlcNAc...) asparagine glycan. The VWFD domain maps to 2786-2952 (LRGHVVDGKH…DYGVGKCTAI (167 aa)).

In terms of assembly, interacts with Nrx-1 (via cytoplasmic domain); the interaction supports apolpp/ApoLI protein stability. May be modified covalently by lipidation. In terms of processing, cleaved into 2 chains by furin protease. However, prevention of cleavage does not impair its function. As to expression, during stage 12, it is highly present throughout the yolk sac. By late stage 14, it localizes in the lateral fat body cells. Starting at stage 14, it localizes to the apodemes. Component of hemolymph clots (at protein level). Expressed in the amniosera. Expressed in rhabdomere of photoreceptor cells in retina (at protein level). In terms of tissue distribution, expressed in rhabdomere of photoreceptor cells in retina (at protein level). Expressed in simper cells as well as interphotoreceptor matrix (at protein level).

The protein localises to the secreted. It is found in the cell projection. Its subcellular location is the rhabdomere. Functionally, constitutes the major component of lipophorin, which mediates transport for various types of lipids in hemolymph. Acts by forming lipoprotein particles that bind lipoproteins and lipids. Also involved in the transport of hydrophobic ligands like juvenile hormones, pheromone hydrocarbons and carotenoids. Required for morphogens wingless (wg) and hedgehog (hh) function, probably by acting as vehicles for the movement of wg and hh, explaining how covalently lipidated wg and hh can spread over long distances. May also be involved in transport and/or metabolism of heme. Involved in yolk granule formation. May be a component of yolk incorporated into yolk granules via yl/yolkless-mediated endocytosis and the endolysosomal pathway. The protein is Apolipophorins of Drosophila melanogaster (Fruit fly).